The sequence spans 562 residues: Sulfite reductase [NADPH] hemoprotein beta-component (562 aa).

C426, C432, C471, and C475 together coordinate [4Fe-4S] cluster. C475 contributes to the siroheme binding site.

This sequence belongs to the nitrite and sulfite reductase 4Fe-4S domain family. As to quaternary structure, alpha(8)-beta(8). The alpha component is a flavoprotein, the beta component is a hemoprotein. It depends on siroheme as a cofactor. Requires [4Fe-4S] cluster as cofactor.

The catalysed reaction is hydrogen sulfide + 3 NADP(+) + 3 H2O = sulfite + 3 NADPH + 4 H(+). It functions in the pathway sulfur metabolism; hydrogen sulfide biosynthesis; hydrogen sulfide from sulfite (NADPH route): step 1/1. Component of the sulfite reductase complex that catalyzes the 6-electron reduction of sulfite to sulfide. This is one of several activities required for the biosynthesis of L-cysteine from sulfate. This is Sulfite reductase [NADPH] hemoprotein beta-component from Shewanella denitrificans (strain OS217 / ATCC BAA-1090 / DSM 15013).